The following is a 315-amino-acid chain: Ribose-phosphate pyrophosphokinase (315 aa).

Residues 37 to 39 (DSE) and 96 to 97 (RQ) each bind ATP. 2 residues coordinate Mg(2+): histidine 131 and aspartate 170. Residue lysine 194 is part of the active site. Residues arginine 196, aspartate 220, and 224-228 (DTGGT) contribute to the D-ribose 5-phosphate site.

The protein belongs to the ribose-phosphate pyrophosphokinase family. Class I subfamily. As to quaternary structure, homohexamer. It depends on Mg(2+) as a cofactor.

It localises to the cytoplasm. The enzyme catalyses D-ribose 5-phosphate + ATP = 5-phospho-alpha-D-ribose 1-diphosphate + AMP + H(+). The protein operates within metabolic intermediate biosynthesis; 5-phospho-alpha-D-ribose 1-diphosphate biosynthesis; 5-phospho-alpha-D-ribose 1-diphosphate from D-ribose 5-phosphate (route I): step 1/1. In terms of biological role, involved in the biosynthesis of the central metabolite phospho-alpha-D-ribosyl-1-pyrophosphate (PRPP) via the transfer of pyrophosphoryl group from ATP to 1-hydroxyl of ribose-5-phosphate (Rib-5-P). This chain is Ribose-phosphate pyrophosphokinase, found in Marinomonas sp. (strain MWYL1).